The sequence spans 577 residues: MPDRTEKHSTMPDSPVDVKTQSRLTPPAMPPPPTTQGAPRTSSFTPTTLTNGTSHSPTALNGAPSPPNGFSNGPSSSSSSSLANQQLPPACGARQLSKLKRFLTTLQQFGNDISPEIGERVRTLVLGLVNSTLTIEEFHSKLQEATNFPLRPFVIPFLKANLPLLQRELLHCARLAKQNPAQYLAQHEQLLLDASTTSPVDSSELLLDVNENGKRRTPDRTKENGFDREPLHSEHPSKRPCTISPGQRYSPNNGLSYQPNGLPHPTPPPPQHYRLDDMAIAHHYRDSYRHPSHRDLRDRNRPMGLHGTRQEEMIDHRLTDREWAEEWKHLDHLLNCIMDMVEKTRRSLTVLRRCQEADREELNYWIRRYSDAEDLKKGGSSSSSHSRQQSPVNPDPVALDAHREFLHRPASGYVPEEIWKKAEEAVNEVKRQAMTELQKAVSEAERKAHDMITTERAKMERTVAEAKRQAAEDALAVINQQEDSSESCWNCGRKASETCSGCNTARYCGSFCQHKDWEKHHHICGQTLQAPQQGDTPAVSSSVTPSSGAGSPMDTPPAATPRSTTPGTPSTIETTPR.

Over residues Met-1 to Thr-10 the composition is skewed to basic and acidic residues. Positions Met-1–Leu-87 are disordered. Ser-14 is subject to Phosphoserine. Residues Ser-42 to Ala-59 are compositionally biased toward polar residues. Low complexity predominate over residues Asn-68–Leu-87. Residues Ala-93–Glu-188 form the TAFH domain. The tract at residues Ser-203–Gln-271 is disordered. Over residues Glu-211–Ser-237 the composition is skewed to basic and acidic residues. The span at Ser-244–Gln-258 shows a compositional bias: polar residues. The segment covering Leu-262–Gln-271 has biased composition (pro residues). Residues Gln-310–Glu-356 form an important for oligomerization region. The tract at residues Gln-310–Glu-356 is nervy homology region 2 (NHR2). Residues Asp-374–Pro-396 form a disordered region. Positions Ser-380–Ser-390 are enriched in low complexity. Ser-390 is modified (phosphoserine). A nervy homology region 3 (NHR3) region spans residues Glu-416–Glu-465. Zn(2+)-binding residues include Cys-488, Cys-491, Cys-499, Cys-502, Cys-508, Cys-512, His-520, and Cys-524. The MYND-type zinc finger occupies Cys-488 to Cys-524. Positions Gln-529–Arg-577 are disordered. Low complexity-rich tracts occupy residues Thr-536–Met-553 and Thr-560–Arg-577.

Belongs to the CBFA2T family. Homotetramer. Heterotetramer with CBFA2T2 and CBFA2T3. Interacts with TCF12, SIN3A, HDAC1, HDAC2, HDAC3, NCOR1 and NCOR2. Interacts with ATN1 (via its N-terminus); the interaction enhances the transcriptional repression.

It localises to the nucleus. Functionally, transcriptional corepressor which facilitates transcriptional repression via its association with DNA-binding transcription factors and recruitment of other corepressors and histone-modifying enzymes. Can repress the expression of MMP7 in a ZBTB33-dependent manner. Can repress transactivation mediated by TCF12. Acts as a negative regulator of adipogenesis. In Mus musculus (Mouse), this protein is Protein CBFA2T1 (Runx1t1).